We begin with the raw amino-acid sequence, 259 residues long: Global transcriptional regulator CodY (259 aa).

The tract at residues 1–155 (MNLLEKTRKI…GATVVGMEIL (155 aa)) is GAF domain. The H-T-H motif DNA-binding region spans 203-222 (ASKIADRVGITRSVIVNALR). Residue S215 is modified to Phosphoserine.

The protein belongs to the CodY family.

It is found in the cytoplasm. In terms of biological role, DNA-binding global transcriptional regulator which is involved in the adaptive response to starvation and acts by directly or indirectly controlling the expression of numerous genes in response to nutrient availability. During rapid exponential growth, CodY is highly active and represses genes whose products allow adaptation to nutrient depletion. This chain is Global transcriptional regulator CodY, found in Geobacillus kaustophilus (strain HTA426).